The primary structure comprises 677 residues: DNA polymerase epsilon subunit B (677 aa).

This sequence belongs to the DNA polymerase epsilon subunit B family. As to quaternary structure, heterotetramer. Consists of four subunits: POL2, DPB2, DPB3 and DPB4.

The protein resides in the nucleus. Its function is as follows. As accessory component of the DNA polymerase epsilon (DNA polymerase II) participates in chromosomal DNA replication. This chain is DNA polymerase epsilon subunit B (DPB2), found in Eremothecium gossypii (strain ATCC 10895 / CBS 109.51 / FGSC 9923 / NRRL Y-1056) (Yeast).